Here is a 274-residue protein sequence, read N- to C-terminus: Putative bidirectional sugar transporter SWEET7d (274 aa).

Residues 1 to 8 are Extracellular-facing; the sequence is MVPDLIRN. A helical transmembrane segment spans residues 9 to 29; it reads VVGIVGNVISFGLFLSPVPTF. Residues 9–96 form the MtN3/slv 1 domain; the sequence is VVGIVGNVIS…TIFFLFSDKK (88 aa). The Cytoplasmic segment spans residues 30 to 45; the sequence is WRIIKNKDVRDFKADQ. Residues 46 to 66 form a helical membrane-spanning segment; it reads YLATLLNCMLWVFYGLPIVHP. Residues 67 to 68 lie on the Extracellular side of the membrane; that stretch reads NS. Residues 69 to 89 traverse the membrane as a helical segment; it reads ILVVTINGIGLVIEAVYLTIF. Residues 90–100 lie on the Cytoplasmic side of the membrane; sequence FLFSDKKNKKK. The chain crosses the membrane as a helical span at residues 101 to 121; that stretch reads MGVVLATEALFMAAVALGVLL. At 122-130 the chain is on the extracellular side; it reads DAHTHQRRS. Residues 131–151 traverse the membrane as a helical segment; the sequence is LIVGILCVIFGTIMYSSPLTI. Residues 132–214 form the MtN3/slv 2 domain; it reads IVGILCVIFG…QLILYAIYYR (83 aa). Topologically, residues 152 to 164 are cytoplasmic; that stretch reads MSQVVKTKSVEYM. The helical transmembrane segment at 165–185 threads the bilayer; it reads PLLLSVVSFLNGLCWTSYALI. At 186 to 188 the chain is on the extracellular side; that stretch reads RFD. A helical membrane pass occupies residues 189–209; it reads IFITIPNGLGVLFALMQLILY. Residues 210–274 lie on the Cytoplasmic side of the membrane; the sequence is AIYYRTTPKK…SISRLSHKLA (65 aa). The interval 218-274 is disordered; sequence KKPSTTGPHPRSRIRTSSYQPSPPSPRAPASSPLSARTTTSMAAMSPSISRLSHKLA. A compositionally biased stretch (low complexity) spans 245–258; the sequence is APASSPLSARTTTS.

It belongs to the SWEET sugar transporter family. Forms homooligomers and/or heterooligomers.

The protein localises to the cell membrane. Mediates both low-affinity uptake and efflux of sugar across the plasma membrane. This Oryza sativa subsp. japonica (Rice) protein is Putative bidirectional sugar transporter SWEET7d (SWEET7D).